Here is a 493-residue protein sequence, read N- to C-terminus: Trans-aconitate decarboxylase 1 (493 aa).

The interval 1–22 is disordered; sequence MAPALNANPTTKRDELSAPSAS.

Belongs to the class-II fumarase/aspartase family.

The protein localises to the cytoplasm. It is found in the cytosol. Its subcellular location is the nucleus. The enzyme catalyses trans-aconitate + H(+) = itaconate + CO2. It functions in the pathway secondary metabolite biosynthesis. Trans-aconitate decarboxylase; part of the gene cluster that mediates the biosynthesis of itaconic acid and 2-hydroxyparaconate. Cis-aconitate is secreted by the mitochondrial tricarboxylate transporter MTT1. In the cytosol cis-aconitate is converted into trans-aconitate via isomerization by the aconitate-delta-isomerase ADI1. Decarboxylation of trans-aconitate by the trans-aconitate decarboxylase TAD1 then leads then to the production of itaconic acid. The cytochrome P450 monooxygenase CYP3 further converts itaconate to 2-hydroxyparaconate via oxidation of the double bond, leading to a transient epoxide, which can subsequently be lactonized to produce 2-hydroxyparaconate. Secretion of itaconate and possibly 2-hydroxyparaconate into the medium is mediated by the major facilitator ITP1. The glyoxalase domain-containing protein RDO1 is not involved in the biosynthesis of itaconate and 2-hydroxyparaconate, however, it might play a role in the further conversion of 2-hydroxyparaconate to itatartarate. This is Trans-aconitate decarboxylase 1 from Mycosarcoma maydis (Corn smut fungus).